The sequence spans 346 residues: UDP-3-O-acylglucosamine N-acyltransferase (346 aa).

The active-site Proton acceptor is the histidine 253.

This sequence belongs to the transferase hexapeptide repeat family. LpxD subfamily. As to quaternary structure, homotrimer.

It catalyses the reaction a UDP-3-O-[(3R)-3-hydroxyacyl]-alpha-D-glucosamine + a (3R)-hydroxyacyl-[ACP] = a UDP-2-N,3-O-bis[(3R)-3-hydroxyacyl]-alpha-D-glucosamine + holo-[ACP] + H(+). Its pathway is bacterial outer membrane biogenesis; LPS lipid A biosynthesis. Catalyzes the N-acylation of UDP-3-O-acylglucosamine using 3-hydroxyacyl-ACP as the acyl donor. Is involved in the biosynthesis of lipid A, a phosphorylated glycolipid that anchors the lipopolysaccharide to the outer membrane of the cell. The protein is UDP-3-O-acylglucosamine N-acyltransferase of Rickettsia akari (strain Hartford).